A 433-amino-acid polypeptide reads, in one-letter code: MRKPFYKILYVQVLFAICIGILLGHFWPDTGVAMKPLGDGFIKLIKMIIGPIIFCTVVTGIAGMSDMKKVGRVGGKALLYFEVVSTFALLIGLGAAHLLKPGVGFNIDPATLDTKAIAQYVSKAHGQSTVEFLMHIIPDTVFSAFANGDILQILLVSLFFGAALAVLGERARIVVQLIEQVSKVFFHIVHVITKVAPIGAFGAMAFTIGKYGLGSLVPLLKLIGTFYFTAIVFVLVVLGTIARMTGFSIVRFIAYIKEELLIVLGTSSSEAALPHMMEKLEKLGCSKSVVGLVVPTGYSFNLDGTNIYMTMAVIFIAQATGIELTLMQQLTILAVAMITSKGASGVTGSGFITLAATLAVVPTIPVAGMVLILGIDRFMSECRALTNIIGNGVATVVVSAWERELDRKRLARVLQHGAGDDADTLGEAGQRAA.

Transmembrane regions (helical) follow at residues 8 to 28, 44 to 64, 78 to 98, 148 to 168, 188 to 208, 222 to 242, 307 to 327, and 355 to 375; these read ILYV…HFWP, LIKM…IAGM, LLYF…AAHL, GDIL…AVLG, IVHV…AFTI, LIGT…GTIA, IYMT…LTLM, and AATL…ILGI.

This sequence belongs to the dicarboxylate/amino acid:cation symporter (DAACS) (TC 2.A.23) family.

The protein localises to the cell inner membrane. Functionally, responsible for the transport of dicarboxylates such as succinate, fumarate, and malate from the periplasm across the membrane. This chain is C4-dicarboxylate transport protein, found in Cupriavidus taiwanensis (strain DSM 17343 / BCRC 17206 / CCUG 44338 / CIP 107171 / LMG 19424 / R1) (Ralstonia taiwanensis (strain LMG 19424)).